The chain runs to 318 residues: MFMINIACLIIPILLAVAFLTLVERKTLGYMQVRKGPNIVGPHGLLQPIADAVKLFTKEPLRPLTSSKLLFTVAPTLALTLALTMWLPLPMPHSLINLNLGVLFILAISSLAVYSILWSGWASNSKYALIGALRAVAQTVSYEVTLAIILLSVLLMSGSFTLTNLITTQEHMWLIIPTWPLAMMWFISTLAETNRAPFDLTEGESELVSGFNVEYAAGPFALFFLAEYANIMMMNALTTLLFLGALHTPLVPGIYTANFVLKTLILTIMFLWIRASYPRFRYDQLMHLLWKNFLPLTLAMLMWHVSSPMSLASIPPQT.

8 helical membrane passes run 2–22 (FMIN…FLTL), 69–89 (LLFT…WLPL), 100–120 (LGVL…LWSG), 146–166 (LAII…TNLI), 171–191 (HMWL…STLA), 231–251 (IMMM…TPLV), 253–273 (GIYT…FLWI), and 285–305 (LMHL…MWHV).

The protein belongs to the complex I subunit 1 family. Core subunit of respiratory chain NADH dehydrogenase (Complex I) which is composed of 45 different subunits.

It localises to the mitochondrion inner membrane. It catalyses the reaction a ubiquinone + NADH + 5 H(+)(in) = a ubiquinol + NAD(+) + 4 H(+)(out). In terms of biological role, core subunit of the mitochondrial membrane respiratory chain NADH dehydrogenase (Complex I) which catalyzes electron transfer from NADH through the respiratory chain, using ubiquinone as an electron acceptor. Essential for the catalytic activity and assembly of complex I. This Myrmecophaga tridactyla (Giant anteater) protein is NADH-ubiquinone oxidoreductase chain 1 (MT-ND1).